Here is a 203-residue protein sequence, read N- to C-terminus: Outer-membrane lipoprotein carrier protein (203 aa).

Residues 1–21 (MKKMAIACALLSSVVASSVWA) form the signal peptide. The segment at 178–203 (QQNGAVDPSKFTFTPPQGVTIDDQRK) is disordered.

Belongs to the LolA family. As to quaternary structure, monomer.

It localises to the periplasm. Functionally, participates in the translocation of lipoproteins from the inner membrane to the outer membrane. Only forms a complex with a lipoprotein if the residue after the N-terminal Cys is not an aspartate (The Asp acts as a targeting signal to indicate that the lipoprotein should stay in the inner membrane). The sequence is that of Outer-membrane lipoprotein carrier protein from Salmonella paratyphi A (strain ATCC 9150 / SARB42).